Here is a 439-residue protein sequence, read N- to C-terminus: C4-dicarboxylate transport protein (439 aa).

Helical transmembrane passes span 10–30 (LYVQ…FYPP), 45–65 (LIKM…IAGM), 77–97 (LALL…LVLV), 145–165 (AFAK…GFAL), 185–205 (VLFA…FGAM), 223–243 (LMGT…GTIT), 290–310 (VVGL…AIYL), 332–352 (TLLA…GSGF), and 353–373 (IVLA…LALI). The interval 415–439 (LNGQTAEEASAPQALPDRMESRIHH) is disordered.

It belongs to the dicarboxylate/amino acid:cation symporter (DAACS) (TC 2.A.23) family.

It localises to the cell inner membrane. Functionally, responsible for the transport of dicarboxylates such as succinate, fumarate, and malate from the periplasm across the membrane. In Verminephrobacter eiseniae (strain EF01-2), this protein is C4-dicarboxylate transport protein.